We begin with the raw amino-acid sequence, 74 residues long: Major structural pilin EpdE (74 aa).

Positions 1-12 (MKFLEKLTSKKG) are excised as a propeptide. Q13 carries the pyrrolidone carboxylic acid modification. A QXSXEXXXL motif is present at residues 13–21 (QIAMELGIL).

In terms of processing, the N-terminus is cleaved by the prepilin peptidase EppA, which recognizes the class III signal sequence. N-glycosylated. Glycosylated with an N-linked branched pentasaccharide glycan. May contain glycans at three sites. Glycosylation is AglB-dependent. The N-glycosylation does not occur unless the signal peptide has been cleaved first.

The protein resides in the secreted. Its subcellular location is the cell surface. The protein localises to the fimbrium. Major component of the type IV-like pili. The chain is Major structural pilin EpdE from Methanococcus maripaludis (strain DSM 14266 / JCM 13030 / NBRC 101832 / S2 / LL).